A 273-amino-acid chain; its full sequence is Pantothenate synthetase (273 aa).

27–34 (MGALHDGH) contributes to the ATP binding site. Catalysis depends on H34, which acts as the Proton donor. Q58 is a (R)-pantoate binding site. Q58 contributes to the beta-alanine binding site. Residue 144–147 (GKKD) coordinates ATP. Q150 is a (R)-pantoate binding site. ATP is bound by residues V173 and 181-184 (LSSR).

This sequence belongs to the pantothenate synthetase family. In terms of assembly, homodimer.

It localises to the cytoplasm. It catalyses the reaction (R)-pantoate + beta-alanine + ATP = (R)-pantothenate + AMP + diphosphate + H(+). The protein operates within cofactor biosynthesis; (R)-pantothenate biosynthesis; (R)-pantothenate from (R)-pantoate and beta-alanine: step 1/1. Functionally, catalyzes the condensation of pantoate with beta-alanine in an ATP-dependent reaction via a pantoyl-adenylate intermediate. The polypeptide is Pantothenate synthetase (Campylobacter concisus (strain 13826)).